The sequence spans 782 residues: MGKRDRADRDKKKSRKRHYEDEEDDEEDAPGNDPQEAVPSAAGKQVDESGTKVDEYGAKDYRLQMPLKDDHTSRPLWVAPDGHIFLEAFSPVYKYAQDFLVAIAEPVCRPTHVHEYKLTAYSLYAAVSVGLQTSDITEYLRKLSKTGVPDGIMQFIKLCTVSYGKVKLVLKHNRYFVESCHPDVIQHLLQDPVIRECRLRNSEGEATELITETFTSKSAISKTAESSGGPSTSRVTDPQGKSDIPMDLFDFYEQMDKDEEEEEETQTVSFEVKQEMIEELQKRCIHLEYPLLAEYDFRNDSVNPDINIDLKPTAVLRPYQEKSLRKMFGNGRARSGVIVLPCGAGKSLVGVTAACTVRKRCLVLGNSAVSVEQWKAQFKMWSTIDDSQICRFTSDAKDKPIGCSVAISTYSMLGHTTKRSWEAERVMEWLKTQEWGLMILDEVHTIPAKMFRRVLTIVQAHCKLGLTATLVREDDKIVDLNFLIGPKLYEANWMELQNNGYIAKVQCAEVWCPMSPEFYREYVAIKTKKRILLYTMNPNKFRACQFLIKFHERRNDKIIVFADNVFALKEYAIRLNKPYIYGPTSQGERMQILQNFKHNPKINTIFISKVGDTSFDLPEANVLIQISSHGGSRRQEAQRLGRVLRAKKGMVAEEYNAFFYSLVSQDTQEMAYSTKRQRFLVDQGYSFKVITKLAGMEEEDLAFSTKEEQQQLLQKVLAATDLDAEEEVVAGEFGSRSSQASRRFGTMSSMSGADDTVYMEYHSSRSKAPSKHVHPLFKRFRK.

The span at 1–11 (MGKRDRADRDK) shows a compositional bias: basic and acidic residues. Disordered stretches follow at residues 1–51 (MGKR…ESGT) and 218–241 (SAIS…PQGK). The short motif at 6–18 (RADRDKKKSRKRH) is the Nuclear localization signal element. Acidic residues predominate over residues 21 to 30 (DEEDDEEDAP). A compositionally biased stretch (polar residues) spans 218-236 (SAISKTAESSGGPSTSRVT). The 162-residue stretch at 327–488 (MFGNGRARSG…DLNFLIGPKL (162 aa)) folds into the Helicase ATP-binding domain. 340–347 (LPCGAGKS) lines the ATP pocket. A DEVH box motif is present at residues 441 to 444 (DEVH). In terms of domain architecture, Helicase C-terminal spans 542–702 (RACQFLIKFH…LAGMEEEDLA (161 aa)). Residues arginine 642 and arginine 645 each contribute to the ATP site. Residue serine 686 is modified to Phosphoserine. A Phosphoserine; by CK2 modification is found at serine 751.

The protein belongs to the helicase family. RAD25/XPB subfamily. Component of the 7-subunit TFIIH core complex composed of XPB/ERCC3, XPD/ERCC2, GTF2H1, GTF2H2, GTF2H3, GTF2H4 and GTF2H5, which is active in NER. The core complex associates with the 3-subunit CDK-activating kinase (CAK) module composed of CCNH/cyclin H, CDK7 and MNAT1 to form the 10-subunit holoenzyme (holo-TFIIH) active in transcription. Interacts with PUF60. Interacts with ATF7IP. Interacts with KAT2A; leading to KAT2A recruitment to promoters and acetylation of histones. Part of TBP-based Pol II pre-initiation complex (PIC), in which Pol II core assembles with general transcription factors and other specific initiation factors including GTF2E1, GTF2E2, GTF2F1, GTF2F2, TCEA1, ERCC2, ERCC3, GTF2H2, GTF2H3, GTF2H4, GTF2H5, GTF2A1, GTF2A2, GTF2B and TBP; this large multi-subunit PIC complex mediates DNA unwinding and targets Pol II core to the transcription start site where the first phosphodiester bond forms. In terms of assembly, (Microbial infection) Interacts with Epstein-Barr virus EBNA2. Phosphorylation on Ser-751 by CK2 controls the 5'-excision activity of ERCC1-XPF endonuclease; phosphorylated protein inhibits the excision activity and thus NER. Dephosphorylation reactivates the 5'-excision step. Phosphorylation has no effect on transcription or the 3'-5' helicase activity.

It is found in the nucleus. The catalysed reaction is Couples ATP hydrolysis with the unwinding of duplex DNA by translocating in the 3'-5' direction.. It catalyses the reaction ATP + H2O = ADP + phosphate + H(+). Phosphorylation on Ser-751 by CK2 controls the 5'-excision activity of ERCC1-XPF endonuclease; phosphorylated protein inhibits the excision activity and thus NER. ATPase activity is stimulated by TFIIH subunit p52 (GTF2H4). DNA translocase activity by this subunit in TFIIH is stimulated by XPA, ERCC5/XPG and XFP plus ERCC1; translocase activity is sensitive to triptolide which targets this enzyme. Functionally, ATP-dependent 3'-5' DNA helicase/translocase. Binds dsDNA rather than ssDNA, unzipping it in a translocase rather than classical helicase activity. Component of the general transcription and DNA repair factor IIH (TFIIH) core complex. When complexed to CDK-activating kinase (CAK), involved in RNA transcription by RNA polymerase II. The ATPase activity of XPB/ERCC3, but not its helicase activity, is required for DNA opening; it may wrap around the damaged DNA wedging it open, causing localized melting that allows XPD/ERCC2 helicase to anchor. In transcription, TFIIH has an essential role in transcription initiation. When the pre-initiation complex (PIC) has been established, TFIIH is required for promoter opening and promoter escape. The ATP-dependent helicase activity of XPB/ERCC3 is required for promoter opening and promoter escape. In transcription pre-initiation complexes induces and propagates a DNA twist to open DNA. Also involved in transcription-coupled nucleotide excision repair (NER) of damaged DNA. In NER, TFIIH acts by opening DNA around the lesion to allow the excision of the damaged oligonucleotide and its replacement by a new DNA fragment. The structure of the TFIIH transcription complex differs from the NER-TFIIH complex; large movements by XPD/ERCC2 and XPB/ERCC3 are stabilized by XPA. XPA retains XPB/ERCC3 at the 5' end of a DNA bubble (mimicking DNA damage). The sequence is that of General transcription and DNA repair factor IIH helicase/translocase subunit XPB from Homo sapiens (Human).